The following is an 859-amino-acid chain: Ribose import ATP-binding protein RbsA 1 (859 aa).

The interval 1–351 (MRASLENGDD…AARAPDEASE (351 aa)) is disordered. Residues 1–353 (MRASLENGDD…RAPDEASEEA (353 aa)) form a unknown region. Over residues 8-17 (GDDHDAHRLV) the composition is skewed to basic and acidic residues. Over residues 28–43 (RAARRRAFARARRGER) the composition is skewed to basic residues. Composition is skewed to basic and acidic residues over residues 44 to 80 (RARGTAEDRHDVPGAEQPVLRDDAKGARRGGRVDRRA), 89 to 129 (RREQ…EEGG), and 137 to 167 (RERERPGRRVRRLEEFRRGRDVVRLPREGDR). Residues 168–179 (RRRRSRDPRRHP) are compositionally biased toward basic residues. 5 stretches are compositionally biased toward basic and acidic residues: residues 193-214 (GAREIPEREDRRRAERQAGARE), 239-250 (RLDGRAVRDRGV), 263-281 (AGGDRGDAEAELEVHRDVR), 288-301 (DSPRDRHRAREEVG), and 308-323 (DSGRREADRQGQREDV). ABC transporter domains follow at residues 358–594 (LALT…VGRR) and 607–851 (RDAA…TSDV). 390–397 (GENGAGKS) contributes to the ATP binding site.

It belongs to the ABC transporter superfamily. Ribose importer (TC 3.A.1.2.1) family. The complex is composed of an ATP-binding protein (RbsA), two transmembrane proteins (RbsC) and a solute-binding protein (RbsB).

It localises to the cell inner membrane. The enzyme catalyses D-ribose(out) + ATP + H2O = D-ribose(in) + ADP + phosphate + H(+). In terms of biological role, part of the ABC transporter complex RbsABC involved in ribose import. Responsible for energy coupling to the transport system. This chain is Ribose import ATP-binding protein RbsA 1, found in Burkholderia pseudomallei (strain 1710b).